The following is a 1402-amino-acid chain: Defective in tip formation protein A (1402 aa).

4 disordered regions span residues 1-20, 37-94, 109-133, and 210-292; these read MKDI…PPQI, NVTT…PQIV, NTPS…DNDI, and KQSS…RRLK. Repeat copies occupy residues 12-18 and 40-46. The 4 X 7 AA repeat of T-T-T-[IV]-[AQ]-P-P stretch occupies residues 12-92; that stretch reads TTTVAPPQIN…TTTTTVQPPQ (81 aa). The segment covering 38–47 has biased composition (low complexity); sequence VTTTTVQPPQ. The segment covering 48-58 has biased composition (pro residues); that stretch reads IVSPPSPPSPP. Residues 59 to 94 are compositionally biased toward low complexity; it reads QTTTIAPPTILPTTKTTTTTTTTTTTTTTVQPPQIV. A run of 2 repeats spans residues 60–66 and 86–92. Positions 210–234 are enriched in low complexity; the sequence is KQSSQSQLQQQLSSQSLQQIQQKSK. Positions 235 to 253 are enriched in pro residues; the sequence is QPPPQQQQQQQPPPPPIPL. The span at 254–279 shows a compositional bias: low complexity; the sequence is LPQIHQQLKPKQQQEQQQQQEQQQQQ. The stretch at 350-383 forms a coiled coil; the sequence is QRIKSFIENHKKKKQKYREYQSEKNQQQKSNSKK. Disordered regions lie at residues 429-453 and 712-745; these read DQQQ…SPMT and NNNN…NLSN. The segment covering 430–453 has biased composition (low complexity); that stretch reads QQQQQQQQQQSTMTTTSSSSSPMT.

Its subcellular location is the cell surface. Functionally, required for correct organization of the actin cytoskeleton and cytokinesis. Also required for apical sorting of prestalk cells, a prerequisite for formation of the tip at the mound stage and subsequent formation of the fruiting body. May be required for cell adhesion. The chain is Defective in tip formation protein A (dtfA) from Dictyostelium discoideum (Social amoeba).